The primary structure comprises 354 residues: Vascular endothelial growth factor D (354 aa).

Residues 1–21 (MYREWVVVNVFMMLYVQLVQG) form the signal peptide. Residues 22-88 (SSNEHGPVKR…SRSASHRSTR (67 aa)) constitute a propeptide, or 99 (in a minor form). 3 cysteine pairs are disulfide-bonded: C111–C153, C142–C189, and C146–C191. 2 N-linked (GlcNAc...) asparagine glycosylation sites follow: N155 and N185. Residues 206 to 354 (SIQIPEEDRC…AQGPHSRKNP (149 aa)) constitute a propeptide that is removed on maturation. Residues 222–237 (CPIDMLWDSNKCKCVL) form a 1; approximate repeat. The tract at residues 222–318 (CPIDMLWDSN…PDTCSCEDRC (97 aa)) is 4 X 16 AA repeats of C-X(10)-C-X-C-X(1,3)-C. 3 tandem repeats follow at residues 258 to 273 (CGPHMMFDEDRCECVC), 277 to 293 (CPKDLIQHPKNCSCFEC), and 301 to 318 (CQKHKLFHPDTCSCEDRC). An N-linked (GlcNAc...) asparagine glycan is attached at N287.

The protein belongs to the PDGF/VEGF growth factor family. As to quaternary structure, homodimer; non-covalent and antiparallel. In terms of processing, undergoes a complex proteolytic maturation which generates a variety of processed secreted forms with increased activity toward VEGFR-3 and VEGFR-2. VEGF-D first form an antiparallel homodimer linked by disulfide bonds before secretion. The fully processed VEGF-D is composed mostly of two VEGF homology domains (VHDs) bound by non-covalent interactions. Highly expressed in lung, heart, small intestine and fetal lung, and at lower levels in skeletal muscle, colon, and pancreas.

Its subcellular location is the secreted. Functionally, growth factor active in angiogenesis, lymphangiogenesis and endothelial cell growth, stimulating their proliferation and migration and also has effects on the permeability of blood vessels. May function in the formation of the venous and lymphatic vascular systems during embryogenesis, and also in the maintenance of differentiated lymphatic endothelium in adults. Binds and activates VEGFR-2 (KDR/FLK1) and VEGFR-3 (FLT4) receptors. The sequence is that of Vascular endothelial growth factor D from Homo sapiens (Human).